A 116-amino-acid chain; its full sequence is Large ribosomal subunit protein uL18 (116 aa).

It belongs to the universal ribosomal protein uL18 family. In terms of assembly, part of the 50S ribosomal subunit; part of the 5S rRNA/L5/L18/L25 subcomplex. Contacts the 5S and 23S rRNAs.

Functionally, this is one of the proteins that bind and probably mediate the attachment of the 5S RNA into the large ribosomal subunit, where it forms part of the central protuberance. In Shewanella woodyi (strain ATCC 51908 / MS32), this protein is Large ribosomal subunit protein uL18.